The sequence spans 2201 residues: Genome polyprotein (2201 aa).

G2 is lipidated: N-myristoyl glycine; by host. Topologically, residues 2-1511 (GAQVSTQKTG…YVSRAFICLQ (1510 aa)) are cytoplasmic. Residues 566–582 (KLQGDVEEAIERARCTV) form an amphipathic alpha-helix region. The Cell attachment site motif lies at 858-860 (RGD). Catalysis depends on for protease 2A activity residues H888 and D906. Zn(2+) is bound by residues C923 and C925. Residue C977 is the For protease 2A activity of the active site. 2 residues coordinate Zn(2+): C983 and H985. A membrane-binding region spans residues 1117–1189 (NDSWLKKFTE…EQSAPSQSDQ (73 aa)). An oligomerization region spans residues 1117 to 1255 (NDSWLKKFTE…SPGAGKSVAT (139 aa)). The RNA-binding stretch occupies residues 1138 to 1142 (AIKIQ). Residues 1221–1377 (EKKMSNYIQF…SMYSQNGKIN (157 aa)) form the SF3 helicase domain. The Zn(2+) site is built by C1385, C1397, and C1402. Residues 1385-1402 (CDEECCPVNFKKCCPLVC) form a C4-type; degenerate zinc finger. An RNA-binding region spans residues 1429–1436 (EYNHRHSV). An oligomerization region spans residues 1440-1445 (LEALFQ). Residues 1512 to 1527 (AITTFVSVAGIIYIIY) lie within the membrane without spanning it. Over 1528–2201 (KLFAGFQGAY…TLRRKWLDSF (674 aa)) the chain is Cytoplasmic. The residue at position 1537 (Y1537) is an O-(5'-phospho-RNA)-tyrosine. In terms of domain architecture, Peptidase C3 spans 1557–1735 (GPAFEFAVAM…FSAALLKHYF (179 aa)). Active-site for protease 3C activity residues include H1596, E1627, and C1703. Positions 1966–2082 (GHLIAFDYSG…SYPWPIDASL (117 aa)) constitute a RdRp catalytic domain. 2 residues coordinate Mg(2+): D1972 and D2068.

This sequence belongs to the picornaviruses polyprotein family. In terms of assembly, interacts with capsid protein VP1 and capsid protein VP3 to form heterotrimeric protomers. As to quaternary structure, interacts with capsid protein VP0, and capsid protein VP3 to form heterotrimeric protomers. Five protomers subsequently associate to form pentamers which serve as building blocks for the capsid. Interacts with capsid protein VP2, capsid protein VP3 and capsid protein VP4 following cleavage of capsid protein VP0. Interacts with host integrin heterodimer ITGAV/ITGB6. Interacts with capsid protein VP1 and capsid protein VP3 in the mature capsid. In terms of assembly, interacts with capsid protein VP0 and capsid protein VP1 to form heterotrimeric protomers. Five protomers subsequently associate to form pentamers which serve as building blocks for the capsid. Interacts with capsid protein VP4 in the mature capsid. Interacts with protein 2C; this interaction may be important for virion morphogenesis. As to quaternary structure, interacts with capsid protein VP1 and capsid protein VP3. Homodimer. In terms of assembly, homohexamer; forms a hexameric ring structure with 6-fold symmetry characteristic of AAA+ ATPases. Interacts (via N-terminus) with host RTN3 (via reticulon domain); this interaction is important for viral replication. Interacts with capsid protein VP3; this interaction may be important for virion morphogenesis. As to quaternary structure, interacts with protein 3CD. Homodimer. Interacts with host GBF1. Interacts (via GOLD domain) with host ACBD3 (via GOLD domain); this interaction allows the formation of a viral protein 3A/ACBD3 heterotetramer with a 2:2 stoichiometry, which will stimulate the recruitment of host PI4KB in order to synthesize PI4P at the viral RNA replication sites. In terms of assembly, interacts with RNA-directed RNA polymerase. As to quaternary structure, interacts with protein 3AB and with RNA-directed RNA polymerase. Interacts with Viral protein genome-linked and with protein 3CD. Mg(2+) is required as a cofactor. Specific enzymatic cleavages in vivo by the viral proteases yield processing intermediates and the mature proteins. In terms of processing, myristoylation is required for the formation of pentamers during virus assembly. Further assembly of 12 pentamers and a molecule of genomic RNA generates the provirion. Post-translationally, during virion maturation, immature virions are rendered infectious following cleavage of VP0 into VP4 and VP2. This maturation seems to be an autocatalytic event triggered by the presence of RNA in the capsid and it is followed by a conformational change infectious virion. Myristoylation is required during RNA encapsidation and formation of the mature virus particle. In terms of processing, VPg is uridylylated by the polymerase into VPg-pUpU. This acts as a nucleotide-peptide primer for the genomic RNA replication.

The protein resides in the virion. It is found in the host cytoplasm. It localises to the host cytoplasmic vesicle membrane. The protein localises to the host nucleus. The catalysed reaction is a ribonucleoside 5'-triphosphate + H2O = a ribonucleoside 5'-diphosphate + phosphate + H(+). It carries out the reaction Selective cleavage of Tyr-|-Gly bond in the picornavirus polyprotein.. The enzyme catalyses RNA(n) + a ribonucleoside 5'-triphosphate = RNA(n+1) + diphosphate. It catalyses the reaction Selective cleavage of Gln-|-Gly bond in the poliovirus polyprotein. In other picornavirus reactions Glu may be substituted for Gln, and Ser or Thr for Gly.. With respect to regulation, replication or transcription is subject to high level of random mutations by the nucleotide analog ribavirin. Functionally, forms an icosahedral capsid of pseudo T=3 symmetry with capsid proteins VP2 and VP3. The capsid is 300 Angstroms in diameter, composed of 60 copies of each capsid protein and enclosing the viral positive strand RNA genome. Capsid protein VP1 mainly forms the vertices of the capsid. Capsid protein VP1 interacts with host integrin ITGAV/ITGB6 to provide virion attachment to target host cells. This attachment induces virion internalization. Tyrosine kinases are probably involved in the entry process. After binding to its receptor, the capsid undergoes conformational changes. Capsid protein VP1 N-terminus (that contains an amphipathic alpha-helix) and capsid protein VP4 are externalized. Together, they shape a pore in the host membrane through which viral genome is translocated to host cell cytoplasm. In terms of biological role, forms an icosahedral capsid of pseudo T=3 symmetry with capsid proteins VP2 and VP3. The capsid is 300 Angstroms in diameter, composed of 60 copies of each capsid protein and enclosing the viral positive strand RNA genome. Lies on the inner surface of the capsid shell. After binding to the host receptor, the capsid undergoes conformational changes. Capsid protein VP4 is released, Capsid protein VP1 N-terminus is externalized, and together, they shape a pore in the host membrane through which the viral genome is translocated into the host cell cytoplasm. Its function is as follows. Component of immature procapsids, which is cleaved into capsid proteins VP4 and VP2 after maturation. Allows the capsid to remain inactive before the maturation step. Functionally, cysteine protease that cleaves viral polyprotein and specific host proteins. It is responsible for the autocatalytic cleavage between the P1 and P2 regions, which is the first cleavage occurring in the polyprotein. Also cleaves the host translation initiation factor EIF4G1, in order to shut down the capped cellular mRNA translation. Inhibits the host nucleus-cytoplasm protein and RNA trafficking by cleaving host members of the nuclear pores. Counteracts stress granule formation probably by antagonizing its assembly or promoting its dissassembly. Cleaves and inhibits host IFIH1/MDA5, thereby inhibiting the type-I IFN production and the establishment of the antiviral state. Cleaves and inhibits host MAVS, thereby inhibiting the type-I IFN production and the establishment of the antiviral state. In terms of biological role, plays an essential role in the virus replication cycle by acting as a viroporin. Creates a pore in the host endoplasmic reticulum and as a consequence releases Ca2+ in the cytoplasm of infected cell. In turn, high levels of cytoplasmic calcium may trigger membrane trafficking and transport of viral ER-associated proteins to viroplasms, sites of viral genome replication. Induces and associates with structural rearrangements of intracellular membranes. Displays RNA-binding, nucleotide binding and NTPase activities. May play a role in virion morphogenesis and viral RNA encapsidation by interacting with the capsid protein VP3. Its function is as follows. Localizes the viral replication complex to the surface of membranous vesicles. Together with protein 3CD binds the Cis-Active RNA Element (CRE) which is involved in RNA synthesis initiation. Acts as a cofactor to stimulate the activity of 3D polymerase, maybe through a nucleid acid chaperone activity. Functionally, localizes the viral replication complex to the surface of membranous vesicles. It inhibits host cell endoplasmic reticulum-to-Golgi apparatus transport and causes the disassembly of the Golgi complex, possibly through GBF1 interaction. This would result in depletion of MHC, trail receptors and IFN receptors at the host cell surface. Plays an essential role in viral RNA replication by recruiting ACBD3 and PI4KB at the viral replication sites, thereby allowing the formation of the rearranged membranous structures where viral replication takes place. In terms of biological role, acts as a primer for viral RNA replication and remains covalently bound to viral genomic RNA. VPg is uridylylated prior to priming replication into VPg-pUpU. The oriI viral genomic sequence may act as a template for this. The VPg-pUpU is then used as primer on the genomic RNA poly(A) by the RNA-dependent RNA polymerase to replicate the viral genome. During genome replication, the VPg-RNA linkage is removed by the host TDP2, thereby accelerating replication. During the late stage of the replication cycle, host TDP2 is excluded from sites of viral RNA synthesis and encapsidation, allowing for the generation of progeny virions. Involved in the viral replication complex and viral polypeptide maturation. It exhibits protease activity with a specificity and catalytic efficiency that is different from protease 3C. Protein 3CD lacks polymerase activity. Protein 3CD binds to the 5'UTR of the viral genome. Its function is as follows. Replicates the viral genomic RNA on the surface of intracellular membranes. May form linear arrays of subunits that propagate along a strong head-to-tail interaction called interface-I. Covalently attaches UMP to a tyrosine of VPg, which is used to prime RNA synthesis. The positive stranded RNA genome is first replicated at virus induced membranous vesicles, creating a dsRNA genomic replication form. This dsRNA is then used as template to synthesize positive stranded RNA genomes. ss(+)RNA genomes are either translated, replicated or encapsidated. Functionally, major viral protease that mediates proteolytic processing of the polyprotein. Cleaves host EIF5B, contributing to host translation shutoff. Also cleaves host PABPC1, contributing to host translation shutoff. Cleaves host NLRP1, triggers host N-glycine-mediated degradation of the autoinhibitory NLRP1 N-terminal fragment. In Coxsackievirus A9 (strain Griggs), this protein is Genome polyprotein.